The sequence spans 327 residues: Vacuolar protein sorting-associated protein 26A (327 aa).

Residues 306–327 form a disordered region; that stretch reads RTNFHQRFESPDSQASAEQPEM. S315 carries the phosphoserine modification. Residues 316 to 327 show a composition bias toward polar residues; that stretch reads PDSQASAEQPEM.

The protein belongs to the VPS26 family. Component of the heterotrimeric retromer cargo-selective complex (CSC), also described as vacuolar protein sorting subcomplex (VPS), formed by VPS26 (VPS26A or VPS26B), VPS29 and VPS35. The CSC has a highly elongated structure with VPS26 and VPS29 binding independently at opposite distal ends of VPS35 as central platform. The CSC is believed to associate with variable sorting nexins to form functionally distinct retromer complex variants. The originally described retromer complex (also called SNX-BAR retromer) is a pentamer containing the CSC and a heterodimeric membrane-deforming subcomplex formed between SNX1 or SNX2 and SNX5 or SNX6 (also called SNX-BAR subcomplex); the respective CSC and SNX-BAR subcomplexes associate with low affinity. The CSC associates with SNX3 to form a SNX3-retromer complex. The CSC associates with SNX27, the WASH complex and the SNX-BAR subcomplex to form the SNX27-retromer complex. Interacts with VPS29, VPS35, SNX27. Interacts with SNX1, SNX2, SNX5, SNX6, SNX3, RAB7A, ECPAS, EHD1, WASHC5, SORL1.

It is found in the cytoplasm. The protein resides in the endosome membrane. The protein localises to the early endosome. Its function is as follows. Acts as a component of the retromer cargo-selective complex (CSC). The CSC is believed to be the core functional component of retromer or respective retromer complex variants acting to prevent missorting of selected transmembrane cargo proteins into the lysosomal degradation pathway. The recruitment of the CSC to the endosomal membrane involves RAB7A and SNX3. The SNX-BAR retromer mediates retrograde transport of cargo proteins from endosomes to the trans-Golgi network (TGN) and is involved in endosome-to-plasma membrane transport for cargo protein recycling. The SNX3-retromer mediates the retrograde endosome-to-TGN transport of WLS distinct from the SNX-BAR retromer pathway. The SNX27-retromer is believed to be involved in endosome-to-plasma membrane trafficking and recycling of a broad spectrum of cargo proteins. The CSC complex seems to act as recruitment hub for other proteins, such as the WASH complex and TBC1D5. Required for retrograde transport of lysosomal enzyme receptor IGF2R. Required to regulate transcytosis of the polymeric immunoglobulin receptor (pIgR-pIgA). Required for the endosomal localization of WASHC2 (indicative for the WASH complex). Required for the endosomal localization of TBC1D5. Mediates retromer cargo recognition of SORL1 and is involved in trafficking of SORL1 implicated in sorting and processing of APP. Involved in retromer-independent lysosomal sorting of F2R. Involved in recycling of ADRB2. Acts redundantly with VSP26B in SNX-27 mediated endocytic recycling of SLC2A1/GLUT1. Enhances the affinity of SNX27 for PDZ-binding motifs in cargo proteins. The chain is Vacuolar protein sorting-associated protein 26A (Vps26a) from Mus musculus (Mouse).